The chain runs to 1108 residues: Activity-dependent neuroprotector homeobox protein (1108 aa).

A binds to beta-catenin/CTNNB1 region spans residues methionine 1 to histidine 685. Residues lysine 39 and lysine 72 each participate in a glycyl lysine isopeptide (Lys-Gly) (interchain with G-Cter in SUMO2) cross-link. The C2H2-type 1; degenerate zinc-finger motif lies at phenylalanine 74 to histidine 97. Serine 98 is modified (phosphoserine). Residues leucine 107–histidine 129 form a C2H2-type 2; degenerate zinc finger. The segment at serine 133–proline 154 is disordered. Over residues phenylalanine 143–proline 154 the composition is skewed to basic and acidic residues. Residues lysine 144 and lysine 155 each participate in a glycyl lysine isopeptide (Lys-Gly) (interchain with G-Cter in SUMO2) cross-link. The C2H2-type 3; degenerate zinc-finger motif lies at tyrosine 165–histidine 188. Glycyl lysine isopeptide (Lys-Gly) (interchain with G-Cter in SUMO2) cross-links involve residues lysine 203, lysine 231, lysine 266, lysine 274, lysine 278, lysine 279, lysine 311, and lysine 335. A C2H2-type 4; degenerate zinc finger spans residues isoleucine 221–histidine 244. Arginine 348 carries the asymmetric dimethylarginine modification. The segment at asparagine 354 to glutamine 361 is neuroprotective peptide; contributes to CTNNB1-binding, but less effective than whole N-terminal region. Residues proline 360–asparagine 438 are disordered. Residues lysine 367 and lysine 407 each participate in a glycyl lysine isopeptide (Lys-Gly) (interchain with G-Cter in SUMO2) cross-link. Positions serine 393–glutamine 422 are enriched in polar residues. Serine 408 and serine 412 each carry phosphoserine. Lysine 426 participates in a covalent cross-link: Glycyl lysine isopeptide (Lys-Gly) (interchain with G-Cter in SUMO2). Residues lysine 426 to serine 437 show a composition bias toward pro residues. A C2H2-type 5; atypical zinc finger spans residues lysine 446–histidine 468. 2 C2H2-type zinc fingers span residues serine 488–histidine 509 and leucine 511–histidine 534. Glycyl lysine isopeptide (Lys-Gly) (interchain with G-Cter in SUMO2) cross-links involve residues lysine 599 and lysine 605. Serine 607 bears the Phosphoserine mark. Glycyl lysine isopeptide (Lys-Gly) (interchain with G-Cter in SUMO2) cross-links involve residues lysine 615, lysine 620, lysine 631, and lysine 657. The segment at threonine 621 to histidine 646 adopts a C2H2-type 8; atypical zinc-finger fold. A C2H2-type 9; atypical zinc finger spans residues tyrosine 661–histidine 685. The interval glycine 690–leucine 711 is disordered. A compositionally biased stretch (polar residues) spans lysine 691–proline 709. Lysine 698 participates in a covalent cross-link: Glycyl lysine isopeptide (Lys-Gly) (interchain with G-Cter in SUMO2). Serine 708 bears the Phosphoserine mark. Residues lysine 715, lysine 727, and lysine 730 each participate in a glycyl lysine isopeptide (Lys-Gly) (interchain with G-Cter in SUMO2) cross-link. Serine 737 carries the phosphoserine modification. A Glycyl lysine isopeptide (Lys-Gly) (interchain with G-Cter in SUMO2) cross-link involves residue lysine 744. Residues leucine 753–aspartate 813 constitute a DNA-binding region (homeobox). The residue at position 804 (serine 804) is a Phosphoserine. Residues lysine 806, lysine 828, and lysine 834 each participate in a glycyl lysine isopeptide (Lys-Gly) (interchain with G-Cter in SUMO2) cross-link. Basic and acidic residues predominate over residues lysine 851–histidine 880. Residues lysine 851–serine 1037 are disordered. A phosphoserine mark is found at serine 875, serine 877, serine 885, serine 888, and serine 904. Glycyl lysine isopeptide (Lys-Gly) (interchain with G-Cter in SUMO2) cross-links involve residues lysine 913, lysine 928, and lysine 941. The span at lysine 928–aspartate 938 shows a compositional bias: acidic residues. The segment covering glycine 939–serine 959 has biased composition (basic and acidic residues). Phosphoserine is present on residues serine 959 and serine 961. Over residues proline 977 to serine 988 the composition is skewed to polar residues. A Glycyl lysine isopeptide (Lys-Gly) (interchain with G-Cter in SUMO2) cross-link involves residue lysine 1022. N6-acetyllysine; alternate is present on residues lysine 1041 and lysine 1048. Residues lysine 1041 and lysine 1048 each participate in a glycyl lysine isopeptide (Lys-Gly) (interchain with G-Cter in SUMO2); alternate cross-link. The disordered stretch occupies residues glutamine 1050–alanine 1108. Serine 1077 carries the post-translational modification Phosphoserine.

As to quaternary structure, interacts (via N-terminal region) with beta-catenin/CTNNB1 (via the central armadillo domains); interaction is direct and stabilizes CTNNB1 by modulating its phosphorylation by glycogen synthase kinase-3 beta GSK3B. Expressed in the brain, with a higher expression in cerebellum and hippocampus. Weakly expressed in lung, kidney and intestine, and expressed at intermediate level in testis.

The protein resides in the nucleus. It is found in the chromosome. In terms of biological role, may be involved in transcriptional regulation. May mediate some of the neuroprotective peptide VIP-associated effects involving normal growth and cancer proliferation. Positively modulates WNT-beta-catenin/CTNN1B signaling, acting by regulating phosphorylation of, and thereby stabilizing, CTNNB1. May be required for neural induction and neuronal differentiation. May be involved in erythroid differentiation. The chain is Activity-dependent neuroprotector homeobox protein (Adnp) from Mus musculus (Mouse).